The chain runs to 110 residues: Phosphoribosyl-ATP pyrophosphatase (110 aa).

Belongs to the PRA-PH family.

The protein resides in the cytoplasm. It carries out the reaction 1-(5-phospho-beta-D-ribosyl)-ATP + H2O = 1-(5-phospho-beta-D-ribosyl)-5'-AMP + diphosphate + H(+). It participates in amino-acid biosynthesis; L-histidine biosynthesis; L-histidine from 5-phospho-alpha-D-ribose 1-diphosphate: step 2/9. This chain is Phosphoribosyl-ATP pyrophosphatase, found in Hahella chejuensis (strain KCTC 2396).